A 230-amino-acid polypeptide reads, in one-letter code: Isoprenyl transferase (230 aa).

Asp-14 is a catalytic residue. A Mg(2+)-binding site is contributed by Asp-14. Residues 15–18 (GNGR), Trp-19, Arg-27, His-31, and 59–61 (STE) each bind substrate. Residue Asn-62 is the Proton acceptor of the active site. Residues Trp-63, Arg-65, Arg-175, and 181–183 (RIS) each bind substrate. Glu-194 is a binding site for Mg(2+).

It belongs to the UPP synthase family. As to quaternary structure, homodimer. Mg(2+) is required as a cofactor.

In terms of biological role, catalyzes the condensation of isopentenyl diphosphate (IPP) with allylic pyrophosphates generating different type of terpenoids. The sequence is that of Isoprenyl transferase from Fusobacterium nucleatum subsp. nucleatum (strain ATCC 25586 / DSM 15643 / BCRC 10681 / CIP 101130 / JCM 8532 / KCTC 2640 / LMG 13131 / VPI 4355).